The chain runs to 614 residues: Probable NOT transcription complex subunit VIP2 (614 aa).

3 disordered regions span residues 1–46 (MSNL…NLQG), 58–89 (NMQG…SSGR), and 361–391 (NLGA…GLRP). Residues 364 to 381 (ATYSSHRPQQQPQHTSST) are compositionally biased toward polar residues.

This sequence belongs to the CNOT2/3/5 family. Interacts with Agrobacterium tumefaciens VirE2. Binds to VIP1. Forms a complex made of Agrobacterium VirE2, VIP1, VIP2 and single-stranded DNA (ssDNA).

The protein resides in the nucleus. Functionally, transcriptional regulator required for Agrobacterium-mediated stable genetic transformation by T-DNA integration in host genome, but not for T-DNA transient expression. This Arabidopsis thaliana (Mouse-ear cress) protein is Probable NOT transcription complex subunit VIP2 (VIP2).